The chain runs to 647 residues: Centrosomal protein of 72 kDa (647 aa).

LRR repeat units follow at residues 29 to 50 (ELQSLSIPGTYQEKITHLGHSL), 55 to 76 (GLKSLDLSRNSLVSLEGIQYLT), and 77 to 98 (ALESLNLYYNCISSLAEVFRLH). One can recognise an LRRCT domain in the interval 111 to 150 (NPVVKVEPDYRLFVVHLLPKLQQLDDRPVRASERKASRLH). Basic and acidic residues-rich tracts occupy residues 152–161 (ASEDSLDSKE) and 220–234 (KGREADSRGSQESRH). Disordered stretches follow at residues 152 to 176 (ASEDSLDSKESVPASLKEGRPHHPR), 211 to 256 (PPGS…RETR), and 285 to 413 (PEAS…ALPG). Residue Ser-237 is modified to Phosphoserine. Residues 366–377 (SLSRQDSSESRN) are compositionally biased toward basic and acidic residues. Position 382 is a phosphoserine (Ser-382). Basic and acidic residues predominate over residues 390-402 (EEQRSRGVTDTRE). Ser-404 bears the Phosphoserine mark. Residues 476 to 620 (SLALESKSLQ…AQHRAEVEQM (145 aa)) adopt a coiled-coil conformation.

It belongs to the CEP72 family. Interacts with KIZ, PCM1 and CDK5RAP2.

Its subcellular location is the cytoplasm. It localises to the cytoskeleton. The protein resides in the microtubule organizing center. It is found in the centrosome. The protein localises to the centriolar satellite. In terms of biological role, involved in the recruitment of key centrosomal proteins to the centrosome. Provides centrosomal microtubule-nucleation activity on the gamma-tubulin ring complexes (gamma-TuRCs) and has critical roles in forming a focused bipolar spindle, which is needed for proper tension generation between sister chromatids. Required for localization of KIZ, AKAP9 and gamma-tubulin ring complexes (gamma-TuRCs). Involved in centriole duplication. Required for CDK5RAP22, CEP152, WDR62 and CEP63 centrosomal localization and promotes the centrosomal localization of CDK2. This Homo sapiens (Human) protein is Centrosomal protein of 72 kDa (CEP72).